We begin with the raw amino-acid sequence, 276 residues long: Myoblast determination protein 1 homolog 1 (276 aa).

Positions 84–135 constitute a bHLH domain; that stretch reads DRRKAATMRERRRLSKVNDAFETLKRCTSTNPNQRLPKVDILRNAISYIESL. The interval 228-253 is disordered; the sequence is CPAVQDGSEGSSPCSPGDGSIASENG.

As to quaternary structure, efficient DNA binding requires dimerization with another bHLH protein.

The protein resides in the nucleus. Functionally, may act as a transcriptional activator that promotes transcription of muscle-specific target genes and plays a role in muscle differentiation. The protein is Myoblast determination protein 1 homolog 1 (myod1) of Oncorhynchus mykiss (Rainbow trout).